A 465-amino-acid polypeptide reads, in one-letter code: CUGBP Elav-like family member 3 (465 aa).

RRM domains are found at residues 7 to 88 (IKLF…PADS) and 95 to 174 (KLFV…FADT). Disordered stretches follow at residues 283–311 (PVPT…QSPA) and 345–379 (PPAL…GPDG). The segment covering 345–358 (PPALVAQQPPPPPQ) has biased composition (pro residues). Residues 359-373 (QQQQQQQQQQQQQQQ) show a composition bias toward low complexity. Positions 380–458 (CNIFIYHLPQ…KRLKVQLKRP (79 aa)) constitute an RRM 3 domain.

It belongs to the CELF/BRUNOL family.

The protein localises to the nucleus. It localises to the cytoplasm. Functionally, RNA-binding protein involved in the regulation of pre-mRNA alternative splicing. Mediates exon inclusion and/or exclusion in pre-mRNA that are subject to tissue-specific and developmentally regulated alternative splicing. Specifically activates exon 5 inclusion of cardiac isoforms of TNNT2 during heart remodeling at the juvenile to adult transition. Activates the splicing of MAPT/Tau exon 10. Binds to muscle-specific splicing enhancer (MSE) intronic sites flanking the alternative exon 5 of TNNT2 pre-mRNA. This chain is CUGBP Elav-like family member 3 (Celf3), found in Mus musculus (Mouse).